The primary structure comprises 172 residues: Glutamyl-tRNA(Gln) amidotransferase subunit C-4, mitochondrial (172 aa).

The transit peptide at 1–23 (MIRIPFHLRQTPGRTLHSLVRSF) directs the protein to the mitochondrion. The segment at 51-73 (PSKVPQRPHKSTIDGQSTPTRIP) is disordered.

This sequence belongs to the GatC family. Subunit of the heterotrimeric GatCAB amidotransferase (AdT) complex, composed of A, B and C subunits.

It is found in the mitochondrion. The enzyme catalyses L-glutamyl-tRNA(Gln) + L-glutamine + ATP + H2O = L-glutaminyl-tRNA(Gln) + L-glutamate + ADP + phosphate + H(+). Functionally, allows the formation of correctly charged Gln-tRNA(Gln) through the transamidation of misacylated Glu-tRNA(Gln) in the mitochondria. The reaction takes place in the presence of glutamine and ATP through an activated gamma-phospho-Glu-tRNA(Gln). This chain is Glutamyl-tRNA(Gln) amidotransferase subunit C-4, mitochondrial, found in Culex quinquefasciatus (Southern house mosquito).